Reading from the N-terminus, the 1366-residue chain is Protein HUA2-LIKE 2 (1366 aa).

In terms of domain architecture, PWWP spans 24–81 (VGDLVLAKVKGFPAWPAVVSEPEKWDASPDSKKVFVHFFGTQQIAFCNPGDVEAFTEE). Positions 111 to 124 (LKQQERASDPKSAE) are enriched in basic and acidic residues. 5 disordered regions span residues 111 to 138 (LKQQ…TLMP), 203 to 319 (TYSS…SGSK), 384 to 403 (NVQT…CEEN), 427 to 451 (EANS…AQTS), and 787 to 808 (SESA…TGEK). Positions 213 to 252 (VRSQNCAPQNETCPVQRSKSPSRLQTEKLQSSMLQNSDGG) are enriched in polar residues. Basic and acidic residues predominate over residues 391-403 (SHEKFTERPCEEN). A compositionally biased stretch (polar residues) spans 787–803 (SESANDMQNNSSGSPNI). Positions 836–977 (DVQSTRESYE…HHIRELDSHS (142 aa)) constitute a CID domain. Disordered regions lie at residues 1027–1076 (LKDE…TAER) and 1128–1366 (TSHQ…QRSD). The span at 1032-1052 (GGSDSEGGCDSEGGSDSDGGD) shows a compositional bias: acidic residues. Over residues 1057–1066 (TPEHESRILE) the composition is skewed to basic and acidic residues. Residues 1138–1152 (PPLPSSSPPPPPAPP) show a composition bias toward pro residues. Over residues 1191 to 1223 (LSGSTMHYQGPESSYISGVQLTNSIPQADGSNF) the composition is skewed to polar residues. Pro residues predominate over residues 1229 to 1244 (PSHPHPHPPPPPPPPQ). Basic and acidic residues-rich tracts occupy residues 1251–1262 (EPGHVLKSHRDA) and 1275–1298 (CDER…RDNW). Over residues 1299–1309 (RYPPSSSYGSR) the composition is skewed to low complexity.

As to expression, expressed throughout young primordia, and vegetative and reproductive apices.

It localises to the nucleus. Probable transcription factor that acts with partial redundancy with HULK1 and HULK3. Plays diverse and essential roles in the control of plant development, physiology and flowering time. This is Protein HUA2-LIKE 2 from Arabidopsis thaliana (Mouse-ear cress).